The following is a 389-amino-acid chain: Tryptophan synthase beta chain (389 aa).

An N6-(pyridoxal phosphate)lysine modification is found at lysine 84.

It belongs to the TrpB family. Tetramer of two alpha and two beta chains. Pyridoxal 5'-phosphate serves as cofactor.

The enzyme catalyses (1S,2R)-1-C-(indol-3-yl)glycerol 3-phosphate + L-serine = D-glyceraldehyde 3-phosphate + L-tryptophan + H2O. It functions in the pathway amino-acid biosynthesis; L-tryptophan biosynthesis; L-tryptophan from chorismate: step 5/5. Functionally, the beta subunit is responsible for the synthesis of L-tryptophan from indole and L-serine. The chain is Tryptophan synthase beta chain from Clostridium novyi (strain NT).